Consider the following 393-residue polypeptide: Small RNA 2'-O-methyltransferase (393 aa).

Residues Y36, G55, D78, K83, V115, and I131 each coordinate S-adenosyl-L-methionine. Mg(2+)-binding residues include E132, E135, H136, and H181. The tract at residues 286 to 307 (HLPRRKEQAGERGDKPKDIGGS) is disordered. Residues 290–305 (RKEQAGERGDKPKDIG) show a composition bias toward basic and acidic residues.

This sequence belongs to the methyltransferase superfamily. HEN1 family. It depends on Mg(2+) as a cofactor.

The protein localises to the cytoplasm. The enzyme catalyses small RNA 3'-end nucleotide + S-adenosyl-L-methionine = small RNA 3'-end 2'-O-methylnucleotide + S-adenosyl-L-homocysteine + H(+). In terms of biological role, methyltransferase that adds a 2'-O-methyl group at the 3'-end of piRNAs, a class of 24 to 30 nucleotide RNAs that are generated by a Dicer-independent mechanism and are primarily derived from transposons and other repeated sequence elements. This probably protects the 3'-end of piRNAs from uridylation activity and subsequent degradation. Stabilization of piRNAs is essential for gametogenesis. This is Small RNA 2'-O-methyltransferase (HENMT1) from Homo sapiens (Human).